The sequence spans 481 residues: MEESVKRCRGFSDAREDLMSKLTDALISQVLFYLPTKEAVSTSVLSSRWKSVWLLIPDLDLNSSAFPSNNAFVGFIDKFIDFSKIENSCLHKLKLSIRKEHENDNKSCVTRWIGFVATHKLKHLDVECLLWKKKCLEVMPLTLYITQTLFYLRLHRVLLGNVESISLPCLKTMHLEQNVYANETCLEFFISSCPVLEDLSIVRKVDDNVKVLRVLSQTLTSLFVAFDYGEHRRGFHGYYSLDFGVLIDAPRLKYLKIGDDISRSKIVSNMDSLAKIEIVGLFYIERAFHNKVARNFFIGISRVRDMIISDRAMWFMSFYFLREESTPQFCNLSSLEVKISWSRGINLSMFLDNSPNLKSMVLVIYCKNLEKSVSFSSVPQCLLSSLEFVEIKISRFGIISLGIGIARFFVENSVVLKKLVVHSSRPMRKKSLVAFENLLALPRRSSMCQIISVVDAGSCGGENERCSLAADDAYLLEPSGR.

An F-box domain is found at 17 to 64 (DLMSKLTDALISQVLFYLPTKEAVSTSVLSSRWKSVWLLIPDLDLNSS). An FBD domain is found at 370-423 (EKSVSFSSVPQCLLSSLEFVEIKISRFGIISLGIGIARFFVENSVVLKKLVVHS).

The protein is FBD-associated F-box protein At5g44490 of Arabidopsis thaliana (Mouse-ear cress).